The following is a 433-amino-acid chain: sn-glycerol-3-phosphate-binding periplasmic protein UgpB (433 aa).

The N-terminal stretch at 1–25 (MFTRLITTSVLTGAIALTIGSQAFA) is a signal peptide. 7 residues coordinate sn-glycerol 3-phosphate: tyrosine 67, aspartate 91, serine 146, serine 273, glycine 307, tyrosine 346, and arginine 397.

This sequence belongs to the bacterial solute-binding protein 1 family. The complex is composed of two ATP-binding proteins (UgpC), two transmembrane proteins (UgpA and UgpE) and a solute-binding protein (UgpB).

It is found in the periplasm. Part of the ABC transporter complex UgpBAEC involved in sn-glycerol-3-phosphate (G3P) import. Binds G3P. This Brucella abortus (strain 2308) protein is sn-glycerol-3-phosphate-binding periplasmic protein UgpB (ugpB).